Here is a 495-residue protein sequence, read N- to C-terminus: Adenosylhomocysteinase (495 aa).

Positions 71, 156, and 218 each coordinate substrate. NAD(+) is bound at residue 219-221 (TTT). K248 and D252 together coordinate substrate. Residues N253, 282–287 (GYGDVG), E305, N340, 361–363 (IGH), and N409 contribute to the NAD(+) site.

The protein belongs to the adenosylhomocysteinase family. The cofactor is NAD(+).

The protein localises to the cytoplasm. It catalyses the reaction S-adenosyl-L-homocysteine + H2O = L-homocysteine + adenosine. Its pathway is amino-acid biosynthesis; L-homocysteine biosynthesis; L-homocysteine from S-adenosyl-L-homocysteine: step 1/1. May play a key role in the regulation of the intracellular concentration of adenosylhomocysteine. This is Adenosylhomocysteinase from Mycobacterium bovis (strain ATCC BAA-935 / AF2122/97).